A 158-amino-acid chain; its full sequence is Large ribosomal subunit protein uL11 (158 aa).

The protein belongs to the universal ribosomal protein uL11 family. In terms of assembly, part of the ribosomal stalk of the 50S ribosomal subunit. Interacts with L10 and the large rRNA to form the base of the stalk. L10 forms an elongated spine to which L12 dimers bind in a sequential fashion forming a multimeric L10(L12)X complex.

In terms of biological role, forms part of the ribosomal stalk which helps the ribosome interact with GTP-bound translation factors. This chain is Large ribosomal subunit protein uL11, found in Methanospirillum hungatei JF-1 (strain ATCC 27890 / DSM 864 / NBRC 100397 / JF-1).